We begin with the raw amino-acid sequence, 309 residues long: UDP-N-acetylenolpyruvoylglucosamine reductase (309 aa).

The 166-residue stretch at 34-199 (RVGGPAQVLF…TSARLRGTPA (166 aa)) folds into the FAD-binding PCMH-type domain. The active site involves R179. The active-site Proton donor is S228. E298 is a catalytic residue.

Belongs to the MurB family. FAD serves as cofactor.

The protein resides in the cytoplasm. The catalysed reaction is UDP-N-acetyl-alpha-D-muramate + NADP(+) = UDP-N-acetyl-3-O-(1-carboxyvinyl)-alpha-D-glucosamine + NADPH + H(+). Its pathway is cell wall biogenesis; peptidoglycan biosynthesis. Its function is as follows. Cell wall formation. The protein is UDP-N-acetylenolpyruvoylglucosamine reductase of Rhodopseudomonas palustris (strain ATCC BAA-98 / CGA009).